The chain runs to 498 residues: MKKCWFHSMLSNVELEYRCRLSKSMDNLGPLENTSVSEDPILNDTEKNTYNWSHSDSSNVDHLVGVRDIRNLNVDDTFLVLGRDNKKDGYSIYFDIENQVFGIDNNHSFLSKLEKEFSSYWNSSYLNKGSRSDDSHYDYSMYDNKYSWNNYINSCIDSYLRSQIGIASSILSGSESYSESYISTYILGESRNSSETGNSRLRTSTNGSDFALRENSNDLGVTQKYKHLWVQCEICYGLNYKKFFKSKMNICEQCGYHLKMSSSDRIELSIDPGTWDPMDEEMFSLDPIDFHSEEEPYKDRIDSYQKKTGLTEAIQTGIGQLNGIPVAIGVMDFQFMGGSMGSVVGEKITRLIEYATNQFLPLILVCASGGARMQEGSLSLMQMAKISSALYDYQSNKKLVYVSILTSPTTGGVTASFGMLGDIIIAEPNAYIAFAGKRVIEQTLNKTVPEGSQAAEFLFHKGLFDPIVPRNLLKGVLSELFQLHAFFPLNHNLSRTLT.

Residues 228–498 (LWVQCEICYG…LNHNLSRTLT (271 aa)) enclose the CoA carboxyltransferase N-terminal domain. Residues cysteine 232, cysteine 235, cysteine 251, and cysteine 254 each coordinate Zn(2+). The C4-type zinc-finger motif lies at 232 to 254 (CEICYGLNYKKFFKSKMNICEQC).

Belongs to the AccD/PCCB family. As to quaternary structure, acetyl-CoA carboxylase is a heterohexamer composed of biotin carboxyl carrier protein, biotin carboxylase and 2 subunits each of ACCase subunit alpha and ACCase plastid-coded subunit beta (accD). It depends on Zn(2+) as a cofactor.

The protein localises to the plastid. It localises to the chloroplast stroma. It catalyses the reaction N(6)-carboxybiotinyl-L-lysyl-[protein] + acetyl-CoA = N(6)-biotinyl-L-lysyl-[protein] + malonyl-CoA. It participates in lipid metabolism; malonyl-CoA biosynthesis; malonyl-CoA from acetyl-CoA: step 1/1. Functionally, component of the acetyl coenzyme A carboxylase (ACC) complex. Biotin carboxylase (BC) catalyzes the carboxylation of biotin on its carrier protein (BCCP) and then the CO(2) group is transferred by the transcarboxylase to acetyl-CoA to form malonyl-CoA. The sequence is that of Acetyl-coenzyme A carboxylase carboxyl transferase subunit beta, chloroplastic from Populus trichocarpa (Western balsam poplar).